We begin with the raw amino-acid sequence, 90 residues long: Protein Z600 (90 aa).

Phosphothreonine occurs at positions 22 and 48. The interval 46–65 (PATPSSSGHGKFQTELKKRR) is disordered.

Component of the Frs-CycA-Cdk1 complex composed of Z600, CycA and Cdk1. Interacts preferentially with CycA (via C-terminus) but is also able to interact (via C-terminus) with CycE (via C-terminus).

The protein resides in the nucleus. In terms of biological role, cell cycle regulator that is involved in modulating and adjusting cell proliferation according to the requirements of the developmental program. Interacts with mitotic Cdk1-cyclin complexes to inhibit mitotic entry at the G2/M transition. Likely to function by binding to the hydrophobic patch of cyclins to interfere with the interaction between the complex and certain Cdk1 substrates. At the mid-blastula transition, involved in the cell cycle arrest in G2 of cycle 14 by delaying mitosis and thus reducing cell proliferation allowing cell fate specification and morphogenesis to take place. Acts downstream or in parallel to the checkpoint regulator grp which is also required for the cell cycle pause at cycle 14. During gastrulation, delays mitosis in the ventral region of the embryonic mesoderm thus allowing invagination to be completed before cell division takes place. The chain is Protein Z600 from Drosophila melanogaster (Fruit fly).